Consider the following 196-residue polypeptide: Pro-FMRFamide-related neuropeptide VF (196 aa).

Positions 1 to 21 (MEIISLKRFILLMLATSSLLT) are cleaved as a signal peptide. Residues 22–57 (SNIFCTDESRMPNLYSKKNYDKYSEPRGDLGWEKER) constitute a propeptide that is removed on maturation. Phenylalanine 92 carries the phenylalanine amide modification. Propeptides lie at residues 95 to 99 (NMEEE) and 115 to 121 (NREDSLS). Phenylalanine amide is present on phenylalanine 131. The propeptide occupies 134-196 (TTTAKSITKT…IDDAELKQEK (63 aa)).

Belongs to the FARP (FMRFamide related peptide) family.

The protein resides in the secreted. In terms of biological role, efficiently inhibits forskolin-induced production of cAMP. Acts as a potent negative regulator of gonadotropin synthesis and secretion. Induces secretion of prolactin. Functionally, efficiently inhibits forskolin-induced production of cAMP. Blocks morphine-induced analgesia. Its function is as follows. Shows no inhibitory activity of forskolin-induced production of cAMP. The protein is Pro-FMRFamide-related neuropeptide VF (NPVF) of Bos taurus (Bovine).